The primary structure comprises 224 residues: DNA mismatch repair protein MutH (224 aa).

This sequence belongs to the MutH family.

It is found in the cytoplasm. Its function is as follows. Sequence-specific endonuclease that cleaves unmethylated GATC sequences. It is involved in DNA mismatch repair. The polypeptide is DNA mismatch repair protein MutH (Shewanella amazonensis (strain ATCC BAA-1098 / SB2B)).